The chain runs to 558 residues: WW domain-containing adapter protein with coiled-coil (558 aa).

Disordered stretches follow at residues 1-129 (MVMY…WSEH), 159-244 (QRQK…SPAP), and 321-461 (VAQQ…APGR). Residues 22–32 (QPYQTLKYSSK) are compositionally biased toward polar residues. Composition is skewed to basic and acidic residues over residues 33-46 (SHPD…RDSN) and 56-70 (RRSD…DNTG). The span at 72 to 82 (GRAKAIHPHRG) shows a compositional bias: basic residues. A compositionally biased stretch (low complexity) spans 99–116 (NHSSLHSSNSHSNPNKSS). The WW domain maps to 120-153 (FEPADDWSEHISSSGKKYYYNCRTEVSQWEKPKE). Residues 175 to 184 (PKDRDYRREA) are compositionally biased toward basic and acidic residues. Residues 188–200 (TPASYSSTKSSIA) are compositionally biased toward polar residues. Positions 204–217 (PSSLTPSSSSAAVS) are enriched in low complexity. 2 stretches are compositionally biased toward polar residues: residues 223–234 (NSASSASGSTVP) and 321–378 (VAQQ…MTVK). Positions 402–431 (SPRTLQRQSSQRSPSPGPNHMGSNSSSSSN) are enriched in low complexity. A compositionally biased stretch (gly residues) spans 432–443 (NGGGGGGQGPGV). Residues 529–555 (QATLREQRILFLRQQIKELEKLKNQNS) are a coiled coil.

It localises to the nucleus. Acts as a linker between gene transcription and histone H2B monoubiquitination at 'Lys-120' (H2BK120ub1). Positive regulator of amino acid starvation-induced autophagy. Positively regulates MTOR activity. May negatively regulate the ubiquitin proteasome pathway. The polypeptide is WW domain-containing adapter protein with coiled-coil (waca) (Danio rerio (Zebrafish)).